We begin with the raw amino-acid sequence, 415 residues long: Imidazolonepropionase (415 aa).

Fe(3+) contacts are provided by His-80 and His-82. 2 residues coordinate Zn(2+): His-80 and His-82. Positions 89, 152, and 185 each coordinate 4-imidazolone-5-propanoate. Residue Tyr-152 participates in N-formimidoyl-L-glutamate binding. Residue His-250 coordinates Fe(3+). Position 250 (His-250) interacts with Zn(2+). Gln-253 serves as a coordination point for 4-imidazolone-5-propanoate. Asp-325 provides a ligand contact to Fe(3+). Asp-325 contributes to the Zn(2+) binding site. N-formimidoyl-L-glutamate contacts are provided by Asn-327 and Gly-329. Thr-330 provides a ligand contact to 4-imidazolone-5-propanoate.

It belongs to the metallo-dependent hydrolases superfamily. HutI family. Zn(2+) serves as cofactor. The cofactor is Fe(3+).

The protein localises to the cytoplasm. The catalysed reaction is 4-imidazolone-5-propanoate + H2O = N-formimidoyl-L-glutamate. The protein operates within amino-acid degradation; L-histidine degradation into L-glutamate; N-formimidoyl-L-glutamate from L-histidine: step 3/3. Catalyzes the hydrolytic cleavage of the carbon-nitrogen bond in imidazolone-5-propanoate to yield N-formimidoyl-L-glutamate. It is the third step in the universal histidine degradation pathway. In Rhizobium meliloti (strain 1021) (Ensifer meliloti), this protein is Imidazolonepropionase.